The chain runs to 334 residues: Aspartate carbamoyltransferase catalytic subunit (334 aa).

Arg-71 and Thr-72 together coordinate carbamoyl phosphate. An L-aspartate-binding site is contributed by Lys-99. Residues Arg-121, His-151, and Gln-154 each contribute to the carbamoyl phosphate site. L-aspartate contacts are provided by Arg-184 and Arg-239. Carbamoyl phosphate is bound by residues Gly-280 and Pro-281.

This sequence belongs to the aspartate/ornithine carbamoyltransferase superfamily. ATCase family. In terms of assembly, heterododecamer (2C3:3R2) of six catalytic PyrB chains organized as two trimers (C3), and six regulatory PyrI chains organized as three dimers (R2).

It carries out the reaction carbamoyl phosphate + L-aspartate = N-carbamoyl-L-aspartate + phosphate + H(+). It participates in pyrimidine metabolism; UMP biosynthesis via de novo pathway; (S)-dihydroorotate from bicarbonate: step 2/3. Catalyzes the condensation of carbamoyl phosphate and aspartate to form carbamoyl aspartate and inorganic phosphate, the committed step in the de novo pyrimidine nucleotide biosynthesis pathway. This chain is Aspartate carbamoyltransferase catalytic subunit, found in Pseudomonas fluorescens (strain Pf0-1).